Reading from the N-terminus, the 259-residue chain is NAD kinase (259 aa).

Aspartate 43 (proton acceptor) is an active-site residue. Residues 43-44 (DG), 111-112 (NE), and arginine 136 contribute to the NAD(+) site.

Belongs to the NAD kinase family. It depends on a divalent metal cation as a cofactor.

Its subcellular location is the cytoplasm. The catalysed reaction is NAD(+) + ATP = ADP + NADP(+) + H(+). Involved in the regulation of the intracellular balance of NAD and NADP, and is a key enzyme in the biosynthesis of NADP. Catalyzes specifically the phosphorylation on 2'-hydroxyl of the adenosine moiety of NAD to yield NADP. In Mycoplasma genitalium (strain ATCC 33530 / DSM 19775 / NCTC 10195 / G37) (Mycoplasmoides genitalium), this protein is NAD kinase.